The sequence spans 187 residues: Elongation factor P (187 aa).

The residue at position 33 (K33) is an N6-(3,6-diaminohexanoyl)-5-hydroxylysine.

The protein belongs to the elongation factor P family. May be beta-lysylated on the epsilon-amino group of Lys-33 by the combined action of EpmA and EpmB, and then hydroxylated on the C5 position of the same residue by EpmC (if this protein is present). Lysylation is critical for the stimulatory effect of EF-P on peptide-bond formation. The lysylation moiety may extend toward the peptidyltransferase center and stabilize the terminal 3-CCA end of the tRNA. Hydroxylation of the C5 position on Lys-33 may allow additional potential stabilizing hydrogen-bond interactions with the P-tRNA.

It is found in the cytoplasm. It participates in protein biosynthesis; polypeptide chain elongation. Functionally, involved in peptide bond synthesis. Alleviates ribosome stalling that occurs when 3 or more consecutive Pro residues or the sequence PPG is present in a protein, possibly by augmenting the peptidyl transferase activity of the ribosome. Modification of Lys-33 is required for alleviation. This chain is Elongation factor P, found in Blochmanniella floridana.